The sequence spans 236 residues: 2-C-methyl-D-erythritol 4-phosphate cytidylyltransferase (236 aa).

Belongs to the IspD/TarI cytidylyltransferase family. IspD subfamily. Homodimer.

The catalysed reaction is 2-C-methyl-D-erythritol 4-phosphate + CTP + H(+) = 4-CDP-2-C-methyl-D-erythritol + diphosphate. It participates in isoprenoid biosynthesis; isopentenyl diphosphate biosynthesis via DXP pathway; isopentenyl diphosphate from 1-deoxy-D-xylulose 5-phosphate: step 2/6. Functionally, catalyzes the formation of 4-diphosphocytidyl-2-C-methyl-D-erythritol from CTP and 2-C-methyl-D-erythritol 4-phosphate (MEP). This Salmonella schwarzengrund (strain CVM19633) protein is 2-C-methyl-D-erythritol 4-phosphate cytidylyltransferase.